We begin with the raw amino-acid sequence, 315 residues long: MILILHPLENLKSYISSRPPLVIFMVSVSGMAIAFLTLGYFFKMKEIKSPEMTEDWNTFLLRFNNLDLCVSENETLKHFLNETTPPESTVTSGQARSSTQTPQALEDSGPINISVAITLTLDPLKPFGGYSRNITHLSSTIFGHQIGLSGRDSHEEMNITFTLPAAWNSDDCIVHGHCEQVVFTTCMTVTAASSVFPVTVQPPHCIPETYSNASLWYKIFTTARDSGTKYAQDYNPFWCYKGAVGKVYHALNPKLTVIVPEDDRSLINLHLMDTSYFLFVMVITMFCYAVIRGRPSKLRQSNSEFSPEKVALSDA.

Residues 22–42 traverse the membrane as a helical segment; sequence VIFMVSVSGMAIAFLTLGYFF. Positions 82-103 are enriched in polar residues; the sequence is ETTPPESTVTSGQARSSTQTPQ. The tract at residues 82 to 106 is disordered; sequence ETTPPESTVTSGQARSSTQTPQALE. The next 2 helical transmembrane spans lie at 180–200 and 271–291; these read QVVF…PVTV and LMDT…YAVI.

This sequence belongs to the TMEM248 family.

The protein resides in the membrane. The chain is Transmembrane protein 248 (tmem248) from Xenopus tropicalis (Western clawed frog).